Consider the following 214-residue polypeptide: MNQSLLSQFGTSEERVKRAIEAFKRGNGVLVLDDEDRENEGDLIFPAETITVEQMAKLIRYGSGIVCLCITDELCQQLDLPPMVQNNTSINQTAFTVSIEAAQGVSTGVSAQDRVTTIQVAIADNAKPQDLSRPGHVFPLRAKKGGVLARRGHTEAAVDLASWAGHKPAGVICEITNDDGSMARTLEIVEFGKKFNYPVVTIEDLVRYSSSKVV.

D-ribulose 5-phosphate-binding positions include 37–38, D42, 150–154, and E174; these read RE and RRGHT. E38 contributes to the Mg(2+) binding site. Residue H153 coordinates Mg(2+).

Belongs to the DHBP synthase family. In terms of assembly, homodimer. It depends on Mg(2+) as a cofactor. The cofactor is Mn(2+).

The catalysed reaction is D-ribulose 5-phosphate = (2S)-2-hydroxy-3-oxobutyl phosphate + formate + H(+). It participates in cofactor biosynthesis; riboflavin biosynthesis; 2-hydroxy-3-oxobutyl phosphate from D-ribulose 5-phosphate: step 1/1. Its function is as follows. Catalyzes the conversion of D-ribulose 5-phosphate to formate and 3,4-dihydroxy-2-butanone 4-phosphate. The polypeptide is 3,4-dihydroxy-2-butanone 4-phosphate synthase (Histophilus somni (strain 2336) (Haemophilus somnus)).